The primary structure comprises 185 residues: Elongation factor P (185 aa).

This sequence belongs to the elongation factor P family.

Its subcellular location is the cytoplasm. The protein operates within protein biosynthesis; polypeptide chain elongation. Involved in peptide bond synthesis. Stimulates efficient translation and peptide-bond synthesis on native or reconstituted 70S ribosomes in vitro. Probably functions indirectly by altering the affinity of the ribosome for aminoacyl-tRNA, thus increasing their reactivity as acceptors for peptidyl transferase. In Mesomycoplasma hyopneumoniae (strain 232) (Mycoplasma hyopneumoniae), this protein is Elongation factor P.